The sequence spans 279 residues: Large ribosomal subunit protein uL2 (279 aa).

Disordered stretches follow at residues 1–28 (MPARRYKPTSPGRRNSSVLTRDSVTKEK) and 221–279 (RGTV…GRRR). A compositionally biased stretch (polar residues) spans 12 to 22 (GRRNSSVLTRD).

This sequence belongs to the universal ribosomal protein uL2 family. As to quaternary structure, part of the 50S ribosomal subunit. Forms a bridge to the 30S subunit in the 70S ribosome.

One of the primary rRNA binding proteins. Required for association of the 30S and 50S subunits to form the 70S ribosome, for tRNA binding and peptide bond formation. It has been suggested to have peptidyltransferase activity; this is somewhat controversial. Makes several contacts with the 16S rRNA in the 70S ribosome. The protein is Large ribosomal subunit protein uL2 of Rubrobacter xylanophilus (strain DSM 9941 / JCM 11954 / NBRC 16129 / PRD-1).